Consider the following 431-residue polypeptide: Adenylosuccinate synthetase (431 aa).

GTP contacts are provided by residues 12–18 and 40–42; these read GDEGKGK and GHT. Asp-13 serves as the catalytic Proton acceptor. Mg(2+)-binding residues include Asp-13 and Gly-40. Residues 13–16, 38–41, Thr-131, Arg-145, Gln-225, Thr-240, and Arg-304 each bind IMP; these read DEGK and NAGH. His-41 functions as the Proton donor in the catalytic mechanism. Position 300 to 306 (300 to 306) interacts with substrate; the sequence is VNTGRPR. GTP is bound by residues Arg-306, 332–334, and 414–416; these read KLD and STS.

Belongs to the adenylosuccinate synthetase family. Homodimer. Mg(2+) is required as a cofactor.

It localises to the cytoplasm. It carries out the reaction IMP + L-aspartate + GTP = N(6)-(1,2-dicarboxyethyl)-AMP + GDP + phosphate + 2 H(+). Its pathway is purine metabolism; AMP biosynthesis via de novo pathway; AMP from IMP: step 1/2. Functionally, plays an important role in the de novo pathway of purine nucleotide biosynthesis. Catalyzes the first committed step in the biosynthesis of AMP from IMP. This Rhizobium rhizogenes (strain K84 / ATCC BAA-868) (Agrobacterium radiobacter) protein is Adenylosuccinate synthetase.